The primary structure comprises 540 residues: 2-isopropylmalate synthase (540 aa).

The 262-residue stretch at 8-269 folds into the Pyruvate carboxyltransferase domain; that stretch reads VLIFDTTLRD…YFNPFFGRAE (262 aa). Mn(2+)-binding residues include Asp-17, His-208, His-210, and Asn-244. The tract at residues 408–540 is regulatory domain; sequence QLKLVQVSCG…ATPLDASPTL (133 aa).

This sequence belongs to the alpha-IPM synthase/homocitrate synthase family. LeuA type 1 subfamily. As to quaternary structure, homodimer. It depends on Mn(2+) as a cofactor.

The protein resides in the cytoplasm. It carries out the reaction 3-methyl-2-oxobutanoate + acetyl-CoA + H2O = (2S)-2-isopropylmalate + CoA + H(+). Its pathway is amino-acid biosynthesis; L-leucine biosynthesis; L-leucine from 3-methyl-2-oxobutanoate: step 1/4. In terms of biological role, catalyzes the condensation of the acetyl group of acetyl-CoA with 3-methyl-2-oxobutanoate (2-ketoisovalerate) to form 3-carboxy-3-hydroxy-4-methylpentanoate (2-isopropylmalate). This chain is 2-isopropylmalate synthase, found in Synechococcus sp. (strain WH7803).